The primary structure comprises 381 residues: p55-v-Fos-transforming protein (381 aa).

Residues 137 to 200 (EEKRRIRRER…EKLEFILAAH (64 aa)) enclose the bZIP domain. The basic motif stretch occupies residues 139-159 (KRRIRRERNKMAAAKCRNRRR). Residues 165–193 (LQAETDQLEDKKSALQTEIANLLKEKEKL) are leucine-zipper.

This sequence belongs to the bZIP family. Fos subfamily.

It localises to the host nucleus. The polypeptide is p55-v-Fos-transforming protein (V-FOS) (Mus musculus (Mouse)).